Here is a 276-residue protein sequence, read N- to C-terminus: MAAAKRRVRDAEADLNLPPGFRFHPTDEELVAHYLCPRAAGRAAPVPIIAELDLYRHDPWDLPHRALFGRREWYFFTPRDRKYPNGSRPNRAAASGYWKATGADKPVLHNGRTAGIKKALVFYHGKPPRGVKTEWIMHEYRLAKKGGAAAAAGAGALRLDDWVLCRLYNKKNEWEKMQSRKEEEEAMAAAQSWGETRTPESEVVDSDAFPEMDYSLPAASFDDALLPKEEARDDDWLMGMSLDDLQGLGSLLQADDLSMLAPPPAAKTEPLGAPFF.

The NAC domain occupies 17–170 (LPPGFRFHPT…DWVLCRLYNK (154 aa)).

In terms of tissue distribution, expressed in leaf blades.

The protein resides in the nucleus. In terms of biological role, probable transcription factor involved in stress response. The polypeptide is NAC domain-containing protein 67 (Oryza sativa subsp. japonica (Rice)).